Here is a 523-residue protein sequence, read N- to C-terminus: Maltose/maltodextrin transport system permease protein MalF (523 aa).

Topologically, residues 1-22 (MQSVQGTDAMTAPAASLPGSKK) are cytoplasmic. A helical membrane pass occupies residues 23–45 (VFIKWALLGTVGLINGYATILMY). Residues 46–49 (SRGE) lie on the Periplasmic side of the membrane. The chain crosses the membrane as a helical span at residues 50-69 (VAFAMLTVILTALALYVFGS). At 70–81 (KKTYAHRYIYPG) the chain is on the cytoplasmic side. A helical transmembrane segment spans residues 82-104 (IAGMILFILFPLAYTVGLAFTNY). Residues 105–288 (SAKNQLSLDR…DDGIKEPFIS (184 aa)) are Periplasmic-facing. The chain crosses the membrane as a helical span at residues 289–311 (IFIWTVVFSILTVLLTLMIGLVL). In terms of domain architecture, ABC transmembrane type-1 spans 290 to 514 (FIWTVVFSIL…LLVGALALLN (225 aa)). Over 312 to 322 (ASVVQWEELKG) the chain is Cytoplasmic. Residues 323–345 (RAIYRVLLILPYAVPAFISILIF) form a helical membrane-spanning segment. The Periplasmic portion of the chain corresponds to 346 to 378 (KGLFNQSFGEINMVLNALFGISPSWFSDPIMAK). Residues 379–401 (SMVLIVNTWLGFPYMMILCMGLL) form a helical membrane-spanning segment. At 402–434 (KAIPEDLYEASAIDGANFVQNFTRVTLPLMIKP) the chain is on the cytoplasmic side. The chain crosses the membrane as a helical span at residues 435–457 (LTPLLIASFAFNFNNFVMIQLLT). Over 458–492 (QGGPNMIGTSEPAGYTDLLVSYTYRIAFEGGGGQD) the chain is Periplasmic. Residues 493–515 (FGLASAIATLIFLLVGALALLNL) form a helical membrane-spanning segment. Residues 516–523 (RFTKLSQN) are Cytoplasmic-facing.

Belongs to the binding-protein-dependent transport system permease family. MalFG subfamily. In terms of assembly, the complex is composed of two ATP-binding proteins (MalK), two transmembrane proteins (MalG and MalF) and a solute-binding protein (MalE).

Its subcellular location is the cell inner membrane. Its function is as follows. Part of the ABC transporter complex MalEFGK involved in maltose/maltodextrin import. Probably responsible for the translocation of the substrate across the membrane. The polypeptide is Maltose/maltodextrin transport system permease protein MalF (malF) (Vibrio vulnificus (strain CMCP6)).